We begin with the raw amino-acid sequence, 247 residues long: Flagellin B1 (247 aa).

The propeptide occupies 1-20 (MNKLLRKVRKAFSLKADNKA).

This sequence belongs to the archaeal flagellin family. Glycosylated.

It is found in the archaeal flagellum. In terms of biological role, flagellin is the subunit protein which polymerizes to form the filaments of archaeal flagella. The sequence is that of Flagellin B1 from Thermoplasma volcanium (strain ATCC 51530 / DSM 4299 / JCM 9571 / NBRC 15438 / GSS1).